The chain runs to 926 residues: Periplasmic nitrate reductase (926 aa).

Positions 1 to 30 (MNRRDFIKSAAASAACASAGIAIPANLSAA) form a signal peptide, tat-type signal. The region spanning 37–93 (WRWDKAACRFCGTGCGIMVATKEGKIVAVKGDPEAPVNRGLNCIKGYFNAKIMYGED) is the 4Fe-4S Mo/W bis-MGD-type domain. [4Fe-4S] cluster-binding residues include Cys44, Cys47, Cys51, and Cys79. Mo-bis(molybdopterin guanine dinucleotide) contacts are provided by residues Lys81, Gln149, Asn174, Cys178, 211–218 (WGANMAEM), Met419, Gln423, Asn529, 554–555 (SD), Lys577, Asp604, and 816–825 (TGRVLEHWHS). Trp892 provides a ligand contact to substrate. 2 residues coordinate Mo-bis(molybdopterin guanine dinucleotide): Asn900 and Lys917.

It belongs to the prokaryotic molybdopterin-containing oxidoreductase family. NasA/NapA/NarB subfamily. Component of the periplasmic nitrate reductase NapAB complex composed of NapA and NapB. Requires [4Fe-4S] cluster as cofactor. The cofactor is Mo-bis(molybdopterin guanine dinucleotide). Predicted to be exported by the Tat system. The position of the signal peptide cleavage has not been experimentally proven.

It is found in the periplasm. It catalyses the reaction 2 Fe(II)-[cytochrome] + nitrate + 2 H(+) = 2 Fe(III)-[cytochrome] + nitrite + H2O. Functionally, catalytic subunit of the periplasmic nitrate reductase complex NapAB. Receives electrons from NapB and catalyzes the reduction of nitrate to nitrite. This chain is Periplasmic nitrate reductase, found in Campylobacter curvus (strain 525.92).